Here is a 253-residue protein sequence, read N- to C-terminus: Ethylene-responsive transcription factor RAP2-11 (253 aa).

The segment at residues 21-78 (KFVGVRQRPSGKWVAEIKDTTQKIRMWLGTFETAEEAARAYDEAACLLRGSNTRTNFA) is a DNA-binding region (AP2/ERF).

This sequence belongs to the AP2/ERF transcription factor family. ERF subfamily.

The protein localises to the nucleus. In terms of biological role, probably acts as a transcriptional activator. Binds to the GCC-box pathogenesis-related promoter element. May be involved in the regulation of gene expression by stress factors and by components of stress signal transduction pathways. This chain is Ethylene-responsive transcription factor RAP2-11 (RAP2-11), found in Arabidopsis thaliana (Mouse-ear cress).